The primary structure comprises 466 residues: Argininosuccinate lyase (466 aa).

The protein belongs to the lyase 1 family. Argininosuccinate lyase subfamily.

It is found in the cytoplasm. It catalyses the reaction 2-(N(omega)-L-arginino)succinate = fumarate + L-arginine. It functions in the pathway amino-acid biosynthesis; L-arginine biosynthesis; L-arginine from L-ornithine and carbamoyl phosphate: step 3/3. This is Argininosuccinate lyase from Desulfovibrio desulfuricans (strain ATCC 27774 / DSM 6949 / MB).